The following is a 329-amino-acid chain: uncharacterized protein (329 aa).

Residues 38–184 form the SIS domain; it reads IVKLILKSQE…MACLMRAKNF (147 aa). 56-61 lines the ATP pocket; that stretch reads GVGKSA. CBS domains are found at residues 211 to 267 and 270 to 329; these read QTTN…GVSL and EVRH…GLKA.

This sequence belongs to the SIS family. GutQ/KpsF subfamily.

This is an uncharacterized protein from Helicobacter pylori (strain ATCC 700392 / 26695) (Campylobacter pylori).